The primary structure comprises 557 residues: Formate--tetrahydrofolate ligase 2 (557 aa).

Residue 66–73 coordinates ATP; it reads TPAGEGKT.

Belongs to the formate--tetrahydrofolate ligase family.

It carries out the reaction (6S)-5,6,7,8-tetrahydrofolate + formate + ATP = (6R)-10-formyltetrahydrofolate + ADP + phosphate. Its pathway is one-carbon metabolism; tetrahydrofolate interconversion. This chain is Formate--tetrahydrofolate ligase 2, found in Streptococcus pyogenes serotype M3 (strain ATCC BAA-595 / MGAS315).